The following is a 466-amino-acid chain: F-box/LRR-repeat protein fbxl-1 (466 aa).

In terms of domain architecture, F-box spans 54–100 (SLINRVLPKEVLLKVFSFLDTKALCRSAQVCRSWSILALDGSNWQRV). LRR repeat units follow at residues 122–147 (GGFL…FTSR), 148–173 (CPNL…LGRY), 174–199 (CHKL…IGDG), 200–225 (CPNL…ILSN), 226–251 (CKSL…VEAH), 252–277 (MGAI…IANG), 278–303 (ATAL…LGQH), 304–329 (SHNL…LARG), 330–355 (CRQL…LANN), 356–381 (CTAL…LASK), and 408–433 (CKAL…FQHH).

As to quaternary structure, component of the SCF (SKP1-CUL1-F-box protein)-type E3 ubiquitin ligase complex. In terms of tissue distribution, expressed in neuroglial cells such as the socket cell and sheath cell, neurosecretory motor neurons and regions around the pharynx and anus.

Its subcellular location is the perikaryon. It localises to the cell projection. It is found in the dendrite. The protein localises to the cilium. The protein resides in the axon. Substrate-recognition component of the SCF (SKP1-CUL1-F-box protein)-type E3 ubiquitin ligase complex. Plays a role in regulating the entry into the dauer state. In hermaphrodites, may play a role in modulating the rate of defecation. The protein is F-box/LRR-repeat protein fbxl-1 of Caenorhabditis elegans.